The sequence spans 163 residues: PTS system fructose-specific EIIB component (163 aa).

Residues 1–163 (MMNIVLARID…FVQILRNVTK (163 aa)) enclose the PTS EIIB type-4 domain. His-15 acts as the Pros-phosphohistidine intermediate in catalysis. His-15 bears the Phosphohistidine; by EIIA mark.

Its subcellular location is the cytoplasm. The catalysed reaction is D-fructose(out) + N(pros)-phospho-L-histidyl-[protein] = D-fructose 1-phosphate(in) + L-histidyl-[protein]. Its function is as follows. The phosphoenolpyruvate-dependent sugar phosphotransferase system (sugar PTS), a major carbohydrate active -transport system, catalyzes the phosphorylation of incoming sugar substrates concomitantly with their translocation across the cell membrane. The enzyme II LevDE PTS system is involved in fructose transport. LevD and LevE act as negative regulators of the levanase operon. They may be involved in a PTS-mediated phosphorylation of a regulator. The polypeptide is PTS system fructose-specific EIIB component (Bacillus subtilis (strain 168)).